Here is a 476-residue protein sequence, read N- to C-terminus: Sulfate adenylyltransferase subunit 1 (476 aa).

The region spanning 24–241 (KSLLRFLTCG…EDVDFVQEQE (218 aa)) is the tr-type G domain. The G1 stretch occupies residues 33 to 40 (GSVDDGKS). 33 to 40 (GSVDDGKS) is a GTP binding site. A G2 region spans residues 91–95 (GITID). Positions 112 to 115 (DTPG) are G3. Residues 112–116 (DTPGH) and 167–170 (NKMD) each bind GTP. The G4 stretch occupies residues 167–170 (NKMD). Positions 205–207 (SAL) are G5.

It belongs to the TRAFAC class translation factor GTPase superfamily. Classic translation factor GTPase family. CysN/NodQ subfamily. Heterodimer composed of CysD, the smaller subunit, and CysN.

The enzyme catalyses sulfate + ATP + H(+) = adenosine 5'-phosphosulfate + diphosphate. It participates in sulfur metabolism; hydrogen sulfide biosynthesis; sulfite from sulfate: step 1/3. In terms of biological role, with CysD forms the ATP sulfurylase (ATPS) that catalyzes the adenylation of sulfate producing adenosine 5'-phosphosulfate (APS) and diphosphate, the first enzymatic step in sulfur assimilation pathway. APS synthesis involves the formation of a high-energy phosphoric-sulfuric acid anhydride bond driven by GTP hydrolysis by CysN coupled to ATP hydrolysis by CysD. This chain is Sulfate adenylyltransferase subunit 1, found in Photobacterium profundum (strain SS9).